Here is a 127-residue protein sequence, read N- to C-terminus: Alpha-hordothionin (127 aa).

An N-terminal signal peptide occupies residues 1–18 (MVCLLILGLVLEQVQVEG). Cystine bridges form between Cys-21-Cys-57, Cys-22-Cys-49, Cys-30-Cys-47, and Cys-34-Cys-43. A propeptide spans 64–127 (LALVSNSDEP…GDAGLTSLTA (64 aa)) (acidic domain).

This sequence belongs to the plant thionin (TC 1.C.44) family. 4 C-C subfamily.

It localises to the secreted. Thionins are small plant proteins which are toxic to animal cells. They seem to exert their toxic effect at the level of the cell membrane. Their precise function is not known. The sequence is that of Alpha-hordothionin (THI1.1) from Hordeum vulgare (Barley).